The primary structure comprises 226 residues: Elongation factor G (226 aa).

The protein belongs to the GTP-binding elongation factor family. EF-G/EF-2 subfamily.

The protein resides in the cytoplasm. In terms of biological role, catalyzes the GTP-dependent ribosomal translocation step during translation elongation. During this step, the ribosome changes from the pre-translocational (PRE) to the post-translocational (POST) state as the newly formed A-site-bound peptidyl-tRNA and P-site-bound deacylated tRNA move to the P and E sites, respectively. Catalyzes the coordinated movement of the two tRNA molecules, the mRNA and conformational changes in the ribosome. The sequence is that of Elongation factor G (fusA) from Neisseria gonorrhoeae.